The following is a 798-amino-acid chain: Penicillin-binding protein 1A (798 aa).

Over 2 to 9 (IKKILTTC) the chain is Cytoplasmic. Residues 10 to 30 (FGLFFGFCVFGVGLVAIAILV) form a helical; Signal-anchor for type II membrane protein membrane-spanning segment. The Periplasmic portion of the chain corresponds to 31–798 (TYPKLPSLDS…SKQQQLDSLF (768 aa)). The tract at residues 50 to 218 (LTIYSADGEV…SAYNPIVNPE (169 aa)) is transglycosylase. Glutamate 88 acts as the Proton donor; for transglycosylase activity in catalysis. The tract at residues 378 to 700 (RRALGFAARA…GTIAVPVWVD (323 aa)) is transpeptidase. Serine 461 (acyl-ester intermediate; for transpeptidase activity) is an active-site residue. A disordered region spans residues 739–798 (LMLDNSGIAPQPSRRAKEDDEAAVENEQQGRSDETRQDVQETPVLPSNTDSKQQQLDSLF). The segment covering 766–777 (QQGRSDETRQDV) has biased composition (basic and acidic residues). The span at 783–798 (LPSNTDSKQQQLDSLF) shows a compositional bias: polar residues.

The protein in the N-terminal section; belongs to the glycosyltransferase 51 family. This sequence in the C-terminal section; belongs to the transpeptidase family.

The protein localises to the cell inner membrane. It carries out the reaction [GlcNAc-(1-&gt;4)-Mur2Ac(oyl-L-Ala-gamma-D-Glu-L-Lys-D-Ala-D-Ala)](n)-di-trans,octa-cis-undecaprenyl diphosphate + beta-D-GlcNAc-(1-&gt;4)-Mur2Ac(oyl-L-Ala-gamma-D-Glu-L-Lys-D-Ala-D-Ala)-di-trans,octa-cis-undecaprenyl diphosphate = [GlcNAc-(1-&gt;4)-Mur2Ac(oyl-L-Ala-gamma-D-Glu-L-Lys-D-Ala-D-Ala)](n+1)-di-trans,octa-cis-undecaprenyl diphosphate + di-trans,octa-cis-undecaprenyl diphosphate + H(+). It catalyses the reaction Preferential cleavage: (Ac)2-L-Lys-D-Ala-|-D-Ala. Also transpeptidation of peptidyl-alanyl moieties that are N-acyl substituents of D-alanine.. The protein operates within cell wall biogenesis; peptidoglycan biosynthesis. In terms of biological role, cell wall formation. Synthesis of cross-linked peptidoglycan from the lipid intermediates. The enzyme has a penicillin-insensitive transglycosylase N-terminal domain (formation of linear glycan strands) and a penicillin-sensitive transpeptidase C-terminal domain (cross-linking of the peptide subunits). Essential for cell wall synthesis. This chain is Penicillin-binding protein 1A (mrcA), found in Neisseria gonorrhoeae (strain ATCC 700825 / FA 1090).